Reading from the N-terminus, the 141-residue chain is Nucleoside triphosphatase NudI (141 aa).

One can recognise a Nudix hydrolase domain in the interval 1–141 (MRQRTIVCPL…RHTLALKGLL (141 aa)). Positions 38 to 59 (GGVEPGERIEEALRREVREELG) match the Nudix box motif.

The protein belongs to the Nudix hydrolase family. NudI subfamily. In terms of assembly, monomer. Mg(2+) serves as cofactor.

The catalysed reaction is a ribonucleoside 5'-triphosphate + H2O = a ribonucleoside 5'-phosphate + diphosphate + H(+). The enzyme catalyses a 2'-deoxyribonucleoside 5'-triphosphate + H2O = a 2'-deoxyribonucleoside 5'-phosphate + diphosphate + H(+). It catalyses the reaction dUTP + H2O = dUMP + diphosphate + H(+). It carries out the reaction dTTP + H2O = dTMP + diphosphate + H(+). The catalysed reaction is dCTP + H2O = dCMP + diphosphate + H(+). Catalyzes the hydrolysis of nucleoside triphosphates, with a preference for pyrimidine deoxynucleoside triphosphates (dUTP, dTTP and dCTP). In Salmonella agona (strain SL483), this protein is Nucleoside triphosphatase NudI.